Consider the following 167-residue polypeptide: Keratin-associated protein 1-3 (167 aa).

The protein belongs to the KRTAP type 1 family. In terms of assembly, interacts with hair keratins. In terms of tissue distribution, expressed in the middle/upper portions of the hair cortex, in the region termed the keratogenous zone.

Its function is as follows. In the hair cortex, hair keratin intermediate filaments are embedded in an interfilamentous matrix, consisting of hair keratin-associated proteins (KRTAP), which are essential for the formation of a rigid and resistant hair shaft through their extensive disulfide bond cross-linking with abundant cysteine residues of hair keratins. The matrix proteins include the high-sulfur and high-glycine-tyrosine keratins. The polypeptide is Keratin-associated protein 1-3 (KRTAP1-3) (Homo sapiens (Human)).